The following is a 347-amino-acid chain: UDP-3-O-acylglucosamine N-acyltransferase (347 aa).

Catalysis depends on His245, which acts as the Proton acceptor.

It belongs to the transferase hexapeptide repeat family. LpxD subfamily. As to quaternary structure, homotrimer.

It catalyses the reaction a UDP-3-O-[(3R)-3-hydroxyacyl]-alpha-D-glucosamine + a (3R)-hydroxyacyl-[ACP] = a UDP-2-N,3-O-bis[(3R)-3-hydroxyacyl]-alpha-D-glucosamine + holo-[ACP] + H(+). It participates in bacterial outer membrane biogenesis; LPS lipid A biosynthesis. Catalyzes the N-acylation of UDP-3-O-acylglucosamine using 3-hydroxyacyl-ACP as the acyl donor. Is involved in the biosynthesis of lipid A, a phosphorylated glycolipid that anchors the lipopolysaccharide to the outer membrane of the cell. This chain is UDP-3-O-acylglucosamine N-acyltransferase, found in Chromohalobacter salexigens (strain ATCC BAA-138 / DSM 3043 / CIP 106854 / NCIMB 13768 / 1H11).